Reading from the N-terminus, the 182-residue chain is uncharacterized protein (182 aa).

The segment covering 1-23 has biased composition (polar residues); that stretch reads MILSDQNFLQTQWKEPQTAQSKN. The disordered stretch occupies residues 1–33; sequence MILSDQNFLQTQWKEPQTAQSKNTESKCEFHGN.

This sequence belongs to the peptidase M24 family.

This is an uncharacterized protein from Caenorhabditis elegans.